The sequence spans 150 residues: MDPTELKRVFQMFDKNGDGTITGKELSETLRSLGIYIPDKELTQMIEKIDVNGDGCVDIDEFGELYKTIMDEEDEEEEDMKEAFNVFDQNGDGFITVDELKAVLSSLGLKQGKTLDDCKKMIKKVDVDGDGRVNYKEFRQMMKGGGFNSL.

EF-hand domains are found at residues 1–36 (MDPTELKRVFQMFDKNGDGTITGKELSETLRSLGIY), 37–72 (IPDKELTQMIEKIDVNGDGCVDIDEFGELYKTIMDE), 75–110 (EEEEDMKEAFNVFDQNGDGFITVDELKAVLSSLGLK), and 113–148 (KTLDDCKKMIKKVDVDGDGRVNYKEFRQMMKGGGFN). Residues D14, N16, D18, T20, E25, D50, N52, D54, C56, E61, D88, N90, D92, E99, D126, D128, D130, R132, and E137 each coordinate Ca(2+).

This sequence belongs to the calmodulin family.

Its function is as follows. Potential calcium sensor. The chain is Calmodulin-like protein 7 (CML7) from Arabidopsis thaliana (Mouse-ear cress).